Consider the following 221-residue polypeptide: Lactate racemization regulatory protein (221 aa).

Positions 139-213 (NGKKGAICAF…NHKFIIQDVS (75 aa)) constitute an HTH crp-type domain. A DNA-binding region (H-T-H motif) is located at residues 172 to 192 (NDDIAGFCGISSRSSVNRMLK).

As to quaternary structure, multimerizes on DNA. Multimerization is required for transcription activation.

With respect to regulation, L-lactate acts as a positive effector on the binding and multimerization of LarR on DNA, while D-lactate antagonizes the positive effect of L-lactate. Its function is as follows. Positive transcriptional regulator that is absolutely required for the expression of lactate racemase (Lar) activity. Controls Lar expression by sensing the L-/D-lactate ration. Binds to a 16-bp palindromic sequence (Lar box motif) that is present in the larR-larA intergenic region, allowing transcription of the larABCDE operon. This is Lactate racemization regulatory protein from Lactiplantibacillus plantarum (strain ATCC BAA-793 / NCIMB 8826 / WCFS1) (Lactobacillus plantarum).